A 60-amino-acid chain; its full sequence is MKVLPVLFLTLLVLISIPAETFCQDYNHDRDIVPPRGKRNDFFRSDVSRDDESHPSPGQK.

Positions 1–23 (MKVLPVLFLTLLVLISIPAETFC) are cleaved as a signal peptide. The residue at position 36 (Arg36) is an Arginine amide. A compositionally biased stretch (basic and acidic residues) spans 36–54 (RGKRNDFFRSDVSRDDESH). Residues 36-60 (RGKRNDFFRSDVSRDDESHPSPGQK) form a disordered region. The propeptide occupies 37 to 60 (GKRNDFFRSDVSRDDESHPSPGQK).

The protein belongs to the non-disulfide-bridged peptide (NDBP) superfamily. In terms of tissue distribution, expressed by the venom gland.

It localises to the secreted. Probable antimicrobial peptide. Has no inhibitory activity against herpes simplex virus type 1 (HSV-1). The chain is Antimicrobial peptide Eval151 from Euscorpiops validus (Scorpion).